Consider the following 556-residue polypeptide: Large cysteine-rich periplasmic protein OmcB (556 aa).

The first 22 residues, 1–22, serve as a signal peptide directing secretion; that stretch reads MSKLIRRVVTVLALTSMASCFA. A propeptide spanning residues 23 to 40 is cleaved from the precursor; the sequence is SGGIEAAVAESLITKIVA.

In terms of assembly, part of a disulfide cross-linked outer membrane complex (COMC) composed of the major outer membrane porin (MOMP), the small cysteine-rich protein (OmcA) and the large cysteine-rich periplasmic protein (OmcB).

The protein localises to the periplasm. Functionally, in elementary bodies (EBs, the infectious stage, which is able to survive outside the host cell) provides the structural integrity of the outer envelope through disulfide cross-links with the small cysteine-rich protein and the major outer membrane porin. It has been described in publications as the Sarkosyl-insoluble COMC (Chlamydia outer membrane complex), and serves as the functional equivalent of peptidoglycan. This is Large cysteine-rich periplasmic protein OmcB (omcB) from Chlamydia pneumoniae (Chlamydophila pneumoniae).